We begin with the raw amino-acid sequence, 329 residues long: Ribosomal protein L11 methyltransferase (329 aa).

The S-adenosyl-L-methionine site is built by Thr177, Gly198, Asp220, and Asn264.

Belongs to the methyltransferase superfamily. PrmA family.

Its subcellular location is the cytoplasm. The catalysed reaction is L-lysyl-[protein] + 3 S-adenosyl-L-methionine = N(6),N(6),N(6)-trimethyl-L-lysyl-[protein] + 3 S-adenosyl-L-homocysteine + 3 H(+). In terms of biological role, methylates ribosomal protein L11. In Helicobacter pylori (strain HPAG1), this protein is Ribosomal protein L11 methyltransferase.